Here is a 301-residue protein sequence, read N- to C-terminus: uncharacterized protein (301 aa).

A signal peptide spans 1 to 25 (MKFKNTLSIFKILIILFSFYNVAFS). Residues 26–279 (DDTEKYTFKG…STTGSKDSST (254 aa)) are Extracellular-facing. The segment at 174 to 281 (LYTGSSNTPN…TGSKDSSTGN (108 aa)) is disordered. Residues asparagine 191, asparagine 212, asparagine 234, and asparagine 241 are each glycosylated (N-linked (GlcNAc...) asparagine). Residues 204-234 (SSSDSTNSNSSSTDTASSSPSSSPSSSPSPN) are compositionally biased toward low complexity. Low complexity predominate over residues 254–281 (GGVETSTAGSSTGTTSSTTGSKDSSTGN). A helical membrane pass occupies residues 280 to 300 (GNSILPTLIIVTFFVLTLVIM). Residue serine 301 is a topological domain, cytoplasmic.

It is found in the membrane. This is an uncharacterized protein from Dictyostelium discoideum (Social amoeba).